Consider the following 276-residue polypeptide: Thymidylate synthase (276 aa).

Arginine 26 is a dUMP binding site. Histidine 56 lines the (6R)-5,10-methylene-5,6,7,8-tetrahydrofolate pocket. 131-132 (RR) is a binding site for dUMP. Cysteine 151 acts as the Nucleophile in catalysis. DUMP-binding positions include 178–181 (RSAD), asparagine 189, and 219–221 (HIY). (6R)-5,10-methylene-5,6,7,8-tetrahydrofolate is bound at residue aspartate 181. (6R)-5,10-methylene-5,6,7,8-tetrahydrofolate is bound at residue alanine 275.

Belongs to the thymidylate synthase family. Bacterial-type ThyA subfamily. As to quaternary structure, homodimer.

The protein localises to the cytoplasm. The enzyme catalyses dUMP + (6R)-5,10-methylene-5,6,7,8-tetrahydrofolate = 7,8-dihydrofolate + dTMP. Its pathway is pyrimidine metabolism; dTTP biosynthesis. Its function is as follows. Catalyzes the reductive methylation of 2'-deoxyuridine-5'-monophosphate (dUMP) to 2'-deoxythymidine-5'-monophosphate (dTMP) while utilizing 5,10-methylenetetrahydrofolate (mTHF) as the methyl donor and reductant in the reaction, yielding dihydrofolate (DHF) as a by-product. This enzymatic reaction provides an intracellular de novo source of dTMP, an essential precursor for DNA biosynthesis. This is Thymidylate synthase from Polaromonas naphthalenivorans (strain CJ2).